The chain runs to 139 residues: Cystatin-11 (139 aa).

Residues 1–28 form the signal peptide; that stretch reads MAAGSWKATRLLLAILVALVAFSYQVKR. Intrachain disulfides connect Cys94–Cys102 and Cys115–Cys135. Asn134 is a glycosylation site (N-linked (GlcNAc...) asparagine).

It belongs to the cystatin family. As to expression, expressed in epididymis, where it localizes to the proximal caput and also part of the midcaput. Not detected in other tissues tested.

Its subcellular location is the secreted. Functionally, has antibacterial activity against the Gram-negative bacteria E.coli. May play a role in sperm maturation and fertilization. The polypeptide is Cystatin-11 (Mus musculus (Mouse)).